A 148-amino-acid chain; its full sequence is NADPH-dependent 7-cyano-7-deazaguanine reductase (148 aa).

Cysteine 50 acts as the Thioimide intermediate in catalysis. Catalysis depends on aspartate 57, which acts as the Proton donor. Residues 72 to 74 and 91 to 92 each bind substrate; these read VES and HE.

This sequence belongs to the GTP cyclohydrolase I family. QueF type 1 subfamily.

Its subcellular location is the cytoplasm. It catalyses the reaction 7-aminomethyl-7-carbaguanine + 2 NADP(+) = 7-cyano-7-deazaguanine + 2 NADPH + 3 H(+). It participates in tRNA modification; tRNA-queuosine biosynthesis. Catalyzes the NADPH-dependent reduction of 7-cyano-7-deazaguanine (preQ0) to 7-aminomethyl-7-deazaguanine (preQ1). The protein is NADPH-dependent 7-cyano-7-deazaguanine reductase of Helicobacter pylori (strain G27).